We begin with the raw amino-acid sequence, 436 residues long: Enolase (436 aa).

Residue Gln-167 coordinates (2R)-2-phosphoglycerate. The Proton donor role is filled by Glu-209. Positions 246, 291, and 318 each coordinate Mg(2+). Residues Lys-343, Arg-372, Ser-373, and Lys-394 each contribute to the (2R)-2-phosphoglycerate site. Lys-343 acts as the Proton acceptor in catalysis.

Belongs to the enolase family. In terms of assembly, component of the RNA degradosome, a multiprotein complex involved in RNA processing and mRNA degradation. The cofactor is Mg(2+).

Its subcellular location is the cytoplasm. It localises to the secreted. The protein localises to the cell surface. The enzyme catalyses (2R)-2-phosphoglycerate = phosphoenolpyruvate + H2O. It functions in the pathway carbohydrate degradation; glycolysis; pyruvate from D-glyceraldehyde 3-phosphate: step 4/5. Its function is as follows. Catalyzes the reversible conversion of 2-phosphoglycerate (2-PG) into phosphoenolpyruvate (PEP). It is essential for the degradation of carbohydrates via glycolysis. This is Enolase from Haemophilus influenzae (strain PittGG).